The chain runs to 187 residues: Transmembrane protein 11-B, mitochondrial (187 aa).

2 helical membrane-spanning segments follow: residues 79 to 95 (TAVL…LALP) and 102 to 119 (VSLP…LYGI).

It belongs to the TMEM11 family.

The protein resides in the mitochondrion inner membrane. Functionally, plays a role in mitochondrial morphogenesis. This Xenopus laevis (African clawed frog) protein is Transmembrane protein 11-B, mitochondrial (tmem11-b).